Reading from the N-terminus, the 256-residue chain is Inner membrane transport permease YadH (256 aa).

Residues 1 to 22 (MMHLYWVALKSIWAKEIHRFMR) lie on the Periplasmic side of the membrane. An ABC transmembrane type-2 domain is found at 22-251 (RIWVQTLVPP…LICWSLIQRG (230 aa)). Residues 23–43 (IWVQTLVPPVITMTLYFIIFG) traverse the membrane as a helical segment. The Cytoplasmic portion of the chain corresponds to 44-52 (NLIGSRIGD). The helical transmembrane segment at 53 to 73 (MHGFSYMQFIVPGLIMMSVIT) threads the bilayer. Over 74 to 94 (NAYANVASSFFGAKFQRNIEE) the chain is Periplasmic. The chain crosses the membrane as a helical span at residues 95-115 (LLVAPVPTHVIIAGYVGGGVA). A topological domain (cytoplasmic) is located at residue Arg116. Residues 117–137 (GLFVGILVTAISLFFVPFQVH) traverse the membrane as a helical segment. Position 138 (Ser138) is a topological domain, periplasmic. The chain crosses the membrane as a helical span at residues 139 to 159 (WVFVALTLVLTAVLFSLAGLL). The Cytoplasmic portion of the chain corresponds to 160–169 (NGVFAKTFDD). Residues 170–190 (ISLVPTFVLTPLTYLGGVFYS) form a helical membrane-spanning segment. The Periplasmic segment spans residues 191 to 223 (LTLLPPFWQGLSHLNPIVYMISGFRYGFLGIND). The chain crosses the membrane as a helical span at residues 224-244 (VPLVTTFGVLVVFIVAFYLIC). The Cytoplasmic segment spans residues 245–256 (WSLIQRGRGLRS).

It belongs to the ABC-2 integral membrane protein family.

The protein resides in the cell inner membrane. This is Inner membrane transport permease YadH (yadH) from Escherichia coli O157:H7.